A 153-amino-acid polypeptide reads, in one-letter code: Small ribosomal subunit protein bS16 (153 aa).

A disordered region spans residues 114–153 (ENEPVGEAITPKKKKAKAEDAEAAADAPAEAAAESEAADK). Positions 137 to 153 (AADAPAEAAAESEAADK) are enriched in low complexity.

It belongs to the bacterial ribosomal protein bS16 family.

This Rhodococcus opacus (strain B4) protein is Small ribosomal subunit protein bS16.